The following is a 205-amino-acid chain: Fe/S biogenesis protein NfuA (205 aa).

[4Fe-4S] cluster contacts are provided by Cys-162 and Cys-165.

Belongs to the NfuA family. As to quaternary structure, homodimer. [4Fe-4S] cluster is required as a cofactor.

In terms of biological role, involved in iron-sulfur cluster biogenesis. Binds a 4Fe-4S cluster, can transfer this cluster to apoproteins, and thereby intervenes in the maturation of Fe/S proteins. Could also act as a scaffold/chaperone for damaged Fe/S proteins. In Blochmanniella floridana, this protein is Fe/S biogenesis protein NfuA.